The sequence spans 394 residues: MAKEKFERTKPHVNIGTIGHVDHGKTTLTAAITTVLAKKGLSELRSFDSIDNAPEEKERGITINTSHVEYETANRHYAHVDCPGHADYVKNMVTGAAQMDGAIIVCAATDGPMPQTREHILLARQVNVPRLVVFLNKCDMVDDEEMLELVEMEMRELLSFYDFDGDNTPIIQGSALGALNGVEKWEDKVMELMDAVDNWIPLPPRDVDKPFLMPVEDVFSITGRGTVATGRIESGIIHVGDEVEILGLGEDKKSVVTGVEMFRKLLDQGEAGDNVGLLLRGVDKNEIKRGMVLCKPGQIKPHSRFKAEVYILKKEEGGRHTPFHNKYRPQFYLRTMDCTGEITLPEGTEMVMPGDNVTITVELIYPVALNPGLRFAIREGGRTVGAGQITEIID.

Residues 10-205 (KPHVNIGTIG…VDNWIPLPPR (196 aa)) enclose the tr-type G domain. The interval 19–26 (GHVDHGKT) is G1. A GTP-binding site is contributed by 19–26 (GHVDHGKT). Thr26 contributes to the Mg(2+) binding site. Positions 60-64 (GITIN) are G2. Positions 81-84 (DCPG) are G3. GTP is bound by residues 81-85 (DCPGH) and 136-139 (NKCD). Positions 136-139 (NKCD) are G4. A G5 region spans residues 174 to 176 (SAL).

It belongs to the TRAFAC class translation factor GTPase superfamily. Classic translation factor GTPase family. EF-Tu/EF-1A subfamily. Monomer.

The protein localises to the cytoplasm. The enzyme catalyses GTP + H2O = GDP + phosphate + H(+). Functionally, GTP hydrolase that promotes the GTP-dependent binding of aminoacyl-tRNA to the A-site of ribosomes during protein biosynthesis. This Bacteroides thetaiotaomicron (strain ATCC 29148 / DSM 2079 / JCM 5827 / CCUG 10774 / NCTC 10582 / VPI-5482 / E50) protein is Elongation factor Tu.